The sequence spans 316 residues: Phospholipase A1 2 (316 aa).

The N-terminal stretch at 1–4 (ADDL) is a signal peptide. Residues 5 to 14 (TTLRNGTLDR) constitute a propeptide that is removed on maturation. Cysteine 20 and cysteine 103 are joined by a disulfide. Serine 153 (nucleophile) is an active-site residue. Aspartate 181 functions as the Charge relay system in the catalytic mechanism. 2 disulfides stabilise this stretch: cysteine 192-cysteine 197 and cysteine 235-cysteine 240. The Charge relay system role is filled by histidine 242. 3 disulfides stabilise this stretch: cysteine 257/cysteine 284, cysteine 258/cysteine 309, and cysteine 277/cysteine 282.

This sequence belongs to the AB hydrolase superfamily. Lipase family. In terms of tissue distribution, expressed by the venom gland.

Its subcellular location is the secreted. The enzyme catalyses a 1,2-diacyl-sn-glycero-3-phosphocholine + H2O = a 2-acyl-sn-glycero-3-phosphocholine + a fatty acid + H(+). Functionally, catalyzes the hydrolysis of phosphatidylcholine with phospholipase A1 activity. May act as an allergen and induce hemolytic activity. The polypeptide is Phospholipase A1 2 (Polistes dominula (European paper wasp)).